The primary structure comprises 191 residues: Protein YceI (191 aa).

The N-terminal stretch at 1-22 (MKKSLLGLTFASLMFSAGSAVA) is a signal peptide.

The protein belongs to the UPF0312 family. Type 1 subfamily.

Its subcellular location is the periplasm. The polypeptide is Protein YceI (Escherichia coli O17:K52:H18 (strain UMN026 / ExPEC)).